The chain runs to 405 residues: UDP-N-acetylglucosamine--N-acetylmuramyl-(pentapeptide) pyrophosphoryl-undecaprenol N-acetylglucosamine transferase (405 aa).

Residues 11–13, Asn127, Arg168, Ser191, Ile248, and Gln293 each bind UDP-N-acetyl-alpha-D-glucosamine; that span reads TGG.

It belongs to the glycosyltransferase 28 family. MurG subfamily.

It is found in the cell inner membrane. It carries out the reaction di-trans,octa-cis-undecaprenyl diphospho-N-acetyl-alpha-D-muramoyl-L-alanyl-D-glutamyl-meso-2,6-diaminopimeloyl-D-alanyl-D-alanine + UDP-N-acetyl-alpha-D-glucosamine = di-trans,octa-cis-undecaprenyl diphospho-[N-acetyl-alpha-D-glucosaminyl-(1-&gt;4)]-N-acetyl-alpha-D-muramoyl-L-alanyl-D-glutamyl-meso-2,6-diaminopimeloyl-D-alanyl-D-alanine + UDP + H(+). The protein operates within cell wall biogenesis; peptidoglycan biosynthesis. Its function is as follows. Cell wall formation. Catalyzes the transfer of a GlcNAc subunit on undecaprenyl-pyrophosphoryl-MurNAc-pentapeptide (lipid intermediate I) to form undecaprenyl-pyrophosphoryl-MurNAc-(pentapeptide)GlcNAc (lipid intermediate II). This chain is UDP-N-acetylglucosamine--N-acetylmuramyl-(pentapeptide) pyrophosphoryl-undecaprenol N-acetylglucosamine transferase, found in Sorangium cellulosum (strain So ce56) (Polyangium cellulosum (strain So ce56)).